A 504-amino-acid chain; its full sequence is Cytochrome P450 3A2 (504 aa).

C443 is a binding site for heme.

Belongs to the cytochrome P450 family. Requires heme as cofactor. Expressed in liver.

It localises to the endoplasmic reticulum membrane. It is found in the microsome membrane. It catalyses the reaction an organic molecule + reduced [NADPH--hemoprotein reductase] + O2 = an alcohol + oxidized [NADPH--hemoprotein reductase] + H2O + H(+). Functionally, cytochromes P450 are a group of heme-thiolate monooxygenases. In liver microsomes, this enzyme is involved in an NADPH-dependent electron transport pathway. It oxidizes a variety of structurally unrelated compounds, including steroids, fatty acids, and xenobiotics. In Rattus norvegicus (Rat), this protein is Cytochrome P450 3A2 (Cyp3a2).